Consider the following 375-residue polypeptide: Putative serine protease 47 (375 aa).

An N-terminal signal peptide occupies residues 1–23; the sequence is MGYCQGVSQVAVVLLMFPKEKEA. Residues 41–60 are disordered; sequence DGQLPMGPHSRASQVAPETT. The segment covering 51–60 has biased composition (polar residues); sequence RASQVAPETT. The region spanning 81-323 is the Peptidase S1 domain; that stretch reads IYGGRDAAAG…FINWIDEIMR (243 aa). Residues C106 and C122 are joined by a disulfide bond. Residues H121 and D172 each act as charge relay system in the active site. N183 and N203 each carry an N-linked (GlcNAc...) asparagine glycan. An intrachain disulfide couples C206 to C281. S275 (charge relay system) is an active-site residue.

The protein belongs to the peptidase S1 family.

The protein resides in the secreted. In Homo sapiens (Human), this protein is Putative serine protease 47 (PRSS47P).